Reading from the N-terminus, the 453-residue chain is Allantoinase (453 aa).

Positions 59, 61, 146, 186, 242, and 315 each coordinate Zn(2+). Lys146 is modified (N6-carboxylysine).

It belongs to the metallo-dependent hydrolases superfamily. Allantoinase family. In terms of assembly, homotetramer. It depends on Zn(2+) as a cofactor. In terms of processing, carboxylation allows a single lysine to coordinate two zinc ions.

The catalysed reaction is (S)-allantoin + H2O = allantoate + H(+). It participates in nitrogen metabolism; (S)-allantoin degradation; allantoate from (S)-allantoin: step 1/1. Catalyzes the conversion of allantoin (5-ureidohydantoin) to allantoic acid by hydrolytic cleavage of the five-member hydantoin ring. The polypeptide is Allantoinase (Salmonella agona (strain SL483)).